The following is a 591-amino-acid chain: 5'-nucleotidase domain-containing protein DDB_G0275467 (591 aa).

2 stretches are compositionally biased toward low complexity: residues 38–50 (STTT…SYST) and 68–78 (QHQQQQPQQHQ). The interval 38–88 (STTTTSGIKSYSTHNRSNNDTHTSKSNTIDQHQQQQPQQHQNNDNKHLFTP) is disordered. Asp-165 serves as the catalytic Nucleophile. Positions 165 and 167 each coordinate Mg(2+). Asp-167 functions as the Proton donor in the catalytic mechanism. 305-313 (TAAVGKVHL) contributes to the substrate binding site. Asp-450 is a binding site for Mg(2+).

This sequence belongs to the 5'(3')-deoxyribonucleotidase family. It depends on Mg(2+) as a cofactor.

The polypeptide is 5'-nucleotidase domain-containing protein DDB_G0275467 (Dictyostelium discoideum (Social amoeba)).